Reading from the N-terminus, the 451-residue chain is Tubulin alpha-1 chain (451 aa).

Residue Gln-11 coordinates GTP. Lys-40 carries the N6-acetyllysine modification. GTP contacts are provided by Glu-71, Gly-144, Thr-145, Thr-179, Asn-206, and Asn-228. Glu-71 serves as a coordination point for Mg(2+). Glu-254 is a catalytic residue.

This sequence belongs to the tubulin family. Dimer of alpha and beta chains. A typical microtubule is a hollow water-filled tube with an outer diameter of 25 nm and an inner diameter of 15 nM. Alpha-beta heterodimers associate head-to-tail to form protofilaments running lengthwise along the microtubule wall with the beta-tubulin subunit facing the microtubule plus end conferring a structural polarity. Microtubules usually have 13 protofilaments but different protofilament numbers can be found in some organisms and specialized cells. Mg(2+) is required as a cofactor. In terms of processing, undergoes a tyrosination/detyrosination cycle, the cyclic removal and re-addition of a C-terminal tyrosine residue by the enzymes tubulin tyrosine carboxypeptidase (TTCP) and tubulin tyrosine ligase (TTL), respectively. Acetylation of alpha chains at Lys-40 stabilizes microtubules and affects affinity and processivity of microtubule motors. This modification has a role in multiple cellular functions, ranging from cell motility, cell cycle progression or cell differentiation to intracellular trafficking and signaling.

It is found in the cytoplasm. The protein localises to the cytoskeleton. The catalysed reaction is GTP + H2O = GDP + phosphate + H(+). Tubulin is the major constituent of microtubules, a cylinder consisting of laterally associated linear protofilaments composed of alpha- and beta-tubulin heterodimers. Microtubules grow by the addition of GTP-tubulin dimers to the microtubule end, where a stabilizing cap forms. Below the cap, tubulin dimers are in GDP-bound state, owing to GTPase activity of alpha-tubulin. The chain is Tubulin alpha-1 chain (TUBA1) from Eleusine indica (Goosegrass).